A 160-amino-acid chain; its full sequence is Cytochrome b6-f complex subunit 4 (160 aa).

The next 3 membrane-spanning stretches (helical) occupy residues 36 to 56 (LLYI…GLAV), 95 to 115 (LLGI…PFIE), and 128 to 148 (VAMT…IGAA).

Belongs to the cytochrome b family. PetD subfamily. In terms of assembly, the 4 large subunits of the cytochrome b6-f complex are cytochrome b6, subunit IV (17 kDa polypeptide, PetD), cytochrome f and the Rieske protein, while the 4 small subunits are PetG, PetL, PetM and PetN. The complex functions as a dimer.

The protein localises to the cellular thylakoid membrane. Its function is as follows. Component of the cytochrome b6-f complex, which mediates electron transfer between photosystem II (PSII) and photosystem I (PSI), cyclic electron flow around PSI, and state transitions. The polypeptide is Cytochrome b6-f complex subunit 4 (Synechococcus sp. (strain CC9902)).